A 403-amino-acid polypeptide reads, in one-letter code: S-adenosylmethionine synthase (403 aa).

Position 15 (His15) interacts with ATP. Asp17 contacts Mg(2+). Glu43 lines the K(+) pocket. The L-methionine site is built by Glu56 and Gln99. Residues 99 to 109 (QSPDINQGVDR) form a flexible loop region. ATP-binding positions include 166–168 (DAK), 232–233 (KF), Asp241, 247–248 (RK), Ala264, and Lys268. L-methionine is bound at residue Asp241. An L-methionine-binding site is contributed by Lys272.

This sequence belongs to the AdoMet synthase family. In terms of assembly, homotetramer; dimer of dimers. It depends on Mg(2+) as a cofactor. K(+) is required as a cofactor.

The protein localises to the cytoplasm. It catalyses the reaction L-methionine + ATP + H2O = S-adenosyl-L-methionine + phosphate + diphosphate. Its pathway is amino-acid biosynthesis; S-adenosyl-L-methionine biosynthesis; S-adenosyl-L-methionine from L-methionine: step 1/1. In terms of biological role, catalyzes the formation of S-adenosylmethionine (AdoMet) from methionine and ATP. The overall synthetic reaction is composed of two sequential steps, AdoMet formation and the subsequent tripolyphosphate hydrolysis which occurs prior to release of AdoMet from the enzyme. The chain is S-adenosylmethionine synthase from Xanthomonas campestris pv. campestris (strain 8004).